We begin with the raw amino-acid sequence, 560 residues long: Choline/ethanolamine transporter FLVCR1 (560 aa).

Residues 1-43 (MARPDDEVGPAVAPGHPLGKGYLPVPKGAPDGEARLVPQNGPE) are disordered. Over 1-92 (MARPDDEVGP…EDVPCPACPP (92 aa)) the chain is Cytoplasmic. Residues 93-117 (RTALSPRRFVVLLIFSLYSLVNAFQ) traverse the membrane as a helical segment. Over 118–135 (WIQYSSISNVFEDFYEVS) the chain is Extracellular. Residues 136-163 (PLHINWLSMVYMVAYVPLIFPATWLLDT) traverse the membrane as a helical segment. At 164-165 (RG) the chain is on the cytoplasmic side. Residues 166 to 185 (LRLTALLGSGLNCLGAWVKC) form a helical membrane-spanning segment. Over 186-192 (GSVQRHL) the chain is Extracellular. The helical transmembrane segment at 193–221 (FWVTMLGQILCSVAQVFILGLPSPVASVW) threads the bilayer. Glutamine 207 serves as a coordination point for ethanolamine. At 222-226 (FGPKE) the chain is on the cytoplasmic side. Residues 227 to 252 (VSTACATAVLGNQLGTAVGFLLPPVL) form a helical membrane-spanning segment. Residues 253-270 (VPALGTQNNTGLLAHTQN) lie on the Extracellular side of the membrane. The N-linked (GlcNAc...) asparagine glycan is linked to asparagine 270. Residues 271 to 300 (NTDLLAHNINTMFYGTAFISTFLFFLTVIA) traverse the membrane as a helical segment. The Cytoplasmic portion of the chain corresponds to 301–336 (FKEKPPLPPSQAQAILRDSPPEEYSYKSSIWNLCRN). A helical transmembrane segment spans residues 337–367 (IPFVLLLVSYGIMTGAFYSISTLLNQIILTY). At 368 to 371 (YVGE) the chain is on the extracellular side. A helical membrane pass occupies residues 372 to 400 (EVNAGRIGLTLVVAGMVGSILCGLWLDYT). Over 401–402 (KT) the chain is Cytoplasmic. The helical transmembrane segment at 403 to 425 (YKQTTLIVYVLSFIGMLIFTFTL) threads the bilayer. The Extracellular portion of the chain corresponds to 426–428 (NLG). A helical membrane pass occupies residues 429–458 (YIVALFFTGGILGFFMTGYLPLGFEFAVEI). At 459 to 466 (TYPESEGM) the chain is on the cytoplasmic side. Residues 467 to 492 (SSGLLNTAAQILGIFFTLAQGKITTD) traverse the membrane as a helical segment. Glutamine 476 contributes to the ethanolamine binding site. Glutamine 476 provides a ligand contact to choline. The Extracellular portion of the chain corresponds to 493–495 (YNS). The helical transmembrane segment at 496–518 (PEAGNIFLCAWMFVGIILTALIK) threads the bilayer. At 519–560 (SDLRRHNINTGLTNIDVKAVPVDSRVDPKPKAMVSIQSESSL) the chain is on the cytoplasmic side. Residue serine 542 is modified to Phosphoserine.

It belongs to the major facilitator superfamily. Feline leukemia virus subgroup C receptor (TC 2.A.1.28.1) family.

The protein resides in the cell membrane. It carries out the reaction choline(out) = choline(in). The catalysed reaction is ethanolamine(in) = ethanolamine(out). It catalyses the reaction heme b(in) = heme b(out). Functionally, uniporter that mediates the transport of extracellular choline and ethanolamine into cells, thereby playing a key role in phospholipid biosynthesis. Choline and ethanolamine are the precursors of phosphatidylcholine and phosphatidylethanolamine, respectively, the two most abundant phospholipids. Transport is not coupled with proton transport and is exclusively driven by the choline (or ethanolamine) gradient across the plasma membrane. Also acts as a heme b transporter that mediates heme efflux from the cytoplasm to the extracellular compartment. The polypeptide is Choline/ethanolamine transporter FLVCR1 (Flvcr1) (Mus terricolor (Earth-colored mouse)).